The primary structure comprises 243 residues: Large ribosomal subunit protein uL2 (243 aa).

Residues 198–243 (VDHPFGGGGRQHPGKPKSVSRDTPPGRKVGDIASKRTGRGGKGGQE) are disordered. Residues 221-231 (PPGRKVGDIAS) show a composition bias toward basic and acidic residues.

This sequence belongs to the universal ribosomal protein uL2 family. As to quaternary structure, part of the 50S ribosomal subunit. Forms a bridge to the 30S subunit in the 70S ribosome.

In terms of biological role, one of the primary rRNA binding proteins. Required for association of the 30S and 50S subunits to form the 70S ribosome, for tRNA binding and peptide bond formation. It has been suggested to have peptidyltransferase activity; this is somewhat controversial. Makes several contacts with the 16S rRNA in the 70S ribosome. This Natronomonas pharaonis (strain ATCC 35678 / DSM 2160 / CIP 103997 / JCM 8858 / NBRC 14720 / NCIMB 2260 / Gabara) (Halobacterium pharaonis) protein is Large ribosomal subunit protein uL2.